The chain runs to 102 residues: NADH-quinone oxidoreductase subunit K 2 (102 aa).

Helical transmembrane passes span 6-26 (LEAF…GIIA), 30-50 (LVTV…ALVG), and 66-86 (FIIA…IAIF).

It belongs to the complex I subunit 4L family. In terms of assembly, NDH-1 is composed of 14 different subunits. Subunits NuoA, H, J, K, L, M, N constitute the membrane sector of the complex.

It is found in the cell inner membrane. It catalyses the reaction a quinone + NADH + 5 H(+)(in) = a quinol + NAD(+) + 4 H(+)(out). In terms of biological role, NDH-1 shuttles electrons from NADH, via FMN and iron-sulfur (Fe-S) centers, to quinones in the respiratory chain. The immediate electron acceptor for the enzyme in this species is believed to be ubiquinone. Couples the redox reaction to proton translocation (for every two electrons transferred, four hydrogen ions are translocated across the cytoplasmic membrane), and thus conserves the redox energy in a proton gradient. This chain is NADH-quinone oxidoreductase subunit K 2, found in Aquifex aeolicus (strain VF5).